The sequence spans 440 residues: Streptokinase G (440 aa).

The N-terminal stretch at M1 to A26 is a signal peptide.

Functionally, this protein is not a protease, but it activates plasminogen by complexing with it. As a potential virulence factor, it is thought to prevent the formation of effective fibrin barriers around the site of infection, thereby contributing to the invasiveness of the cells. The sequence is that of Streptokinase G (skg) from Streptococcus sp. (strain 19909).